The following is a 589-amino-acid chain: Glutamine--fructose-6-phosphate aminotransferase [isomerizing] (589 aa).

Cys-2 (nucleophile; for GATase activity) is an active-site residue. A Glutamine amidotransferase type-2 domain is found at 2-221 (CGIIGIVSLR…DDELGFITPE (220 aa)). SIS domains follow at residues 286-426 (VIEE…KMEK) and 445-579 (IGEE…PDKP). The active-site For Fru-6P isomerization activity is Lys-584.

As to quaternary structure, homodimer.

It localises to the cytoplasm. The enzyme catalyses D-fructose 6-phosphate + L-glutamine = D-glucosamine 6-phosphate + L-glutamate. Functionally, catalyzes the first step in hexosamine metabolism, converting fructose-6P into glucosamine-6P using glutamine as a nitrogen source. The protein is Glutamine--fructose-6-phosphate aminotransferase [isomerizing] of Sulfurisphaera tokodaii (strain DSM 16993 / JCM 10545 / NBRC 100140 / 7) (Sulfolobus tokodaii).